The primary structure comprises 536 residues: Maintenance of mitochondrial morphology protein 1 (536 aa).

Residues 1 to 25 lie on the Lumenal side of the membrane; that stretch reads MAGPSNQTQPPPPVLTQPSLSFTQG. Residues 26-46 form a helical membrane-spanning segment; that stretch reads LLVGQLSVVLLIGAFIKFFIF. Residues 47–536 lie on the Cytoplasmic side of the membrane; it reads GEAPPHPSRN…GSMPDPVVVT (490 aa). Disordered regions lie at residues 52–135, 275–331, 416–467, and 505–536; these read HPSR…SHQP, GPGT…ATAA, GRTG…GGSM, and YGGAQGGGGGGGRGGEEQFAIPGSMPDPVVVT. Composition is skewed to polar residues over residues 69 to 81, 88 to 105, and 112 to 121; these read YSLNSISADSSPR, STSNILRPVPSSSTNTRS, and YSATPTNPTS. Residues 122–132 are compositionally biased toward basic residues; the sequence is KHSRSRPHHSS. In terms of domain architecture, SMP-LTD spans 134–409; the sequence is QPESLDWFNV…EPRVQVVGLP (276 aa). Over residues 321–331 the composition is skewed to low complexity; it reads TNTNTAGATAA. 2 stretches are compositionally biased toward gly residues: residues 442 to 467 and 507 to 517; these read TAGGDGVGVRGGGGGGGVGGSGGGSM and GAQGGGGGGGR.

The protein belongs to the MMM1 family. As to quaternary structure, homodimer. Component of the ER-mitochondria encounter structure (ERMES) or MDM complex, composed of MMM1, MDM10, MDM12 and MDM34. An MMM1 homodimer associates with one molecule of MDM12 on each side in a pairwise head-to-tail manner, and the SMP-LTD domains of MMM1 and MDM12 generate a continuous hydrophobic tunnel for phospholipid trafficking.

Its subcellular location is the endoplasmic reticulum membrane. Component of the ERMES/MDM complex, which serves as a molecular tether to connect the endoplasmic reticulum (ER) and mitochondria. Components of this complex are involved in the control of mitochondrial shape and protein biogenesis, and function in nonvesicular lipid trafficking between the ER and mitochondria. The MDM12-MMM1 subcomplex functions in the major beta-barrel assembly pathway that is responsible for biogenesis of all outer membrane beta-barrel proteins, and acts in a late step after the SAM complex. The MDM10-MDM12-MMM1 subcomplex further acts in the TOM40-specific pathway after the action of the MDM12-MMM1 complex. Essential for establishing and maintaining the structure of mitochondria and maintenance of mtDNA nucleoids. This chain is Maintenance of mitochondrial morphology protein 1, found in Ajellomyces dermatitidis (strain ER-3 / ATCC MYA-2586) (Blastomyces dermatitidis).